The following is a 142-amino-acid chain: ATP synthase epsilon chain (142 aa).

It belongs to the ATPase epsilon chain family. As to quaternary structure, F-type ATPases have 2 components, CF(1) - the catalytic core - and CF(0) - the membrane proton channel. CF(1) has five subunits: alpha(3), beta(3), gamma(1), delta(1), epsilon(1). CF(0) has three main subunits: a, b and c.

It is found in the cell inner membrane. Functionally, produces ATP from ADP in the presence of a proton gradient across the membrane. This chain is ATP synthase epsilon chain, found in Shewanella loihica (strain ATCC BAA-1088 / PV-4).